A 20-amino-acid polypeptide reads, in one-letter code: Alpha-basrubrin (20 aa).

The segment covering 1–13 (GADFQECMKEHSQ) has biased composition (basic and acidic residues). A disordered region spans residues 1 to 20 (GADFQECMKEHSQKQHQHQG).

Possesses antifungal activity against B.cinerea, M.arachidicola and F.oxysporum but not C.comatus and R.solani. Inhibits HIV-1 reverse transcriptase and cell-free translation. The sequence is that of Alpha-basrubrin from Basella alba (Malabar spinach).